A 359-amino-acid polypeptide reads, in one-letter code: DNA integrity scanning protein DisA (359 aa).

The region spanning Asp-7 to Asp-146 is the DAC domain. Residues Gly-74, Leu-92, and Thr-105–Thr-109 contribute to the ATP site.

It belongs to the DisA family. In terms of assembly, homooctamer. The cofactor is Mg(2+).

It carries out the reaction 2 ATP = 3',3'-c-di-AMP + 2 diphosphate. Its function is as follows. Participates in a DNA-damage check-point. DisA forms globular foci that rapidly scan along the chromosomes searching for lesions. Also has diadenylate cyclase activity, catalyzing the condensation of 2 ATP molecules into cyclic di-AMP (c-di-AMP). c-di-AMP likely acts as a signaling molecule that may couple DNA integrity with a cellular process. In Kineococcus radiotolerans (strain ATCC BAA-149 / DSM 14245 / SRS30216), this protein is DNA integrity scanning protein DisA.